A 402-amino-acid polypeptide reads, in one-letter code: Formate-dependent phosphoribosylglycinamide formyltransferase (402 aa).

N(1)-(5-phospho-beta-D-ribosyl)glycinamide-binding positions include Glu-23–Leu-24 and Glu-83. ATP contacts are provided by residues Arg-115, Lys-156, Glu-196–Val-199, and Glu-204. The ATP-grasp domain maps to Arg-120–Leu-316. The Mg(2+) site is built by Glu-274 and Glu-287. Residues Asp-294, Lys-364, and Arg-371–Arg-372 contribute to the N(1)-(5-phospho-beta-D-ribosyl)glycinamide site.

It belongs to the PurK/PurT family. As to quaternary structure, homodimer.

The catalysed reaction is N(1)-(5-phospho-beta-D-ribosyl)glycinamide + formate + ATP = N(2)-formyl-N(1)-(5-phospho-beta-D-ribosyl)glycinamide + ADP + phosphate + H(+). Its pathway is purine metabolism; IMP biosynthesis via de novo pathway; N(2)-formyl-N(1)-(5-phospho-D-ribosyl)glycinamide from N(1)-(5-phospho-D-ribosyl)glycinamide (formate route): step 1/1. Involved in the de novo purine biosynthesis. Catalyzes the transfer of formate to 5-phospho-ribosyl-glycinamide (GAR), producing 5-phospho-ribosyl-N-formylglycinamide (FGAR). Formate is provided by PurU via hydrolysis of 10-formyl-tetrahydrofolate. The polypeptide is Formate-dependent phosphoribosylglycinamide formyltransferase (Ignicoccus hospitalis (strain KIN4/I / DSM 18386 / JCM 14125)).